We begin with the raw amino-acid sequence, 880 residues long: MNDNINIAKTYDPKEFEERIYKMWEEGEYFTPKVDKDKKPYTIVMPPPNITGKLHLGHALDNSMQDFLIRVKRMQGYSTLWLPGQDHASIATEVKVENELLKTGLKKKEMGREAFLERVWEWSEEYRGRIRDQLKKLGSSADFTRESFTMDDNLDKAVRAVFVKLYEEGLIYKGNRIVNWCPKCMTALSDAEIEYEENYGNFWHVKYPLVDSEEYLEIATTRPETMLGDTAVAVNPNDERYKHLIGKKLMLPLVNREIPIVADDYVDVEFGTGAVKITPAHDPNDYEVGKRHDLEEIIIMNENGTINELGGKYSGMDRYEARKAIVEDLKKEGFLVKVKEHIHNVSCHDRCNTIIEPMISKQWYVKMKELAKPAIEVVKSGEIKFVPERFDKTYFNWMENIQDWCISRQLWWGHRIPVWYCKDCGETIVSLEEAKKCSKCSSENLIQDEDVLDTWFSSALWPFSTLGWPDKTEDLEYFYPTDVLATGYDIIFFWVARMIFSGLHNMKEIPFKTVLIHGIVRDSEGKKMSKSLGNGVDPLEVIDKYGADALRFMLITGNAPGNDIRFYEERVESARNFANKIWNASRYVMMNLDKNLMEKYKDCKDYNIADTWILSRLNEVIKEVTDNIEKFELGMASQKVYDFMWNEFCDWYIELSKPVLYGEDEKAKGVTFNVLFNVLTSGLKLLHPIMPFITEEIFINIQEEEKTITTSKWPEFKEELKNEEVEKKMSHVIEAIKAIRNVRIEMDVPPSRKAKIMIYALDGIDAFKDGKIYFEKLASASEVEFLNSKEEAPENAVSAVTKGAEIYIPLFDLVDLEKEMERLNKEREKLEKEIERVDKKLSNENFVKKAPEAVVNEEKAKGEKYKEMLEAVLERIKSLK.

Residues 48-58 (PNITGKLHLGH) carry the 'HIGH' region motif. A 'KMSKS' region motif is present at residues 527–531 (KMSKS). Lys-530 is an ATP binding site. Coiled-coil stretches lie at residues 717–741 (KEELKNEEVEKKMSHVIEAIKAIRN) and 810–880 (LFDL…KSLK).

Belongs to the class-I aminoacyl-tRNA synthetase family. ValS type 1 subfamily. Monomer.

It is found in the cytoplasm. The catalysed reaction is tRNA(Val) + L-valine + ATP = L-valyl-tRNA(Val) + AMP + diphosphate. Catalyzes the attachment of valine to tRNA(Val). As ValRS can inadvertently accommodate and process structurally similar amino acids such as threonine, to avoid such errors, it has a 'posttransfer' editing activity that hydrolyzes mischarged Thr-tRNA(Val) in a tRNA-dependent manner. In Clostridium tetani (strain Massachusetts / E88), this protein is Valine--tRNA ligase.